The primary structure comprises 177 residues: Crossover junction endodeoxyribonuclease RuvC (177 aa).

Active-site residues include aspartate 7, glutamate 68, and aspartate 141. 3 residues coordinate Mg(2+): aspartate 7, glutamate 68, and aspartate 141.

The protein belongs to the RuvC family. As to quaternary structure, homodimer which binds Holliday junction (HJ) DNA. The HJ becomes 2-fold symmetrical on binding to RuvC with unstacked arms; it has a different conformation from HJ DNA in complex with RuvA. In the full resolvosome a probable DNA-RuvA(4)-RuvB(12)-RuvC(2) complex forms which resolves the HJ. The cofactor is Mg(2+).

The protein resides in the cytoplasm. It catalyses the reaction Endonucleolytic cleavage at a junction such as a reciprocal single-stranded crossover between two homologous DNA duplexes (Holliday junction).. Functionally, the RuvA-RuvB-RuvC complex processes Holliday junction (HJ) DNA during genetic recombination and DNA repair. Endonuclease that resolves HJ intermediates. Cleaves cruciform DNA by making single-stranded nicks across the HJ at symmetrical positions within the homologous arms, yielding a 5'-phosphate and a 3'-hydroxyl group; requires a central core of homology in the junction. The consensus cleavage sequence is 5'-(A/T)TT(C/G)-3'. Cleavage occurs on the 3'-side of the TT dinucleotide at the point of strand exchange. HJ branch migration catalyzed by RuvA-RuvB allows RuvC to scan DNA until it finds its consensus sequence, where it cleaves and resolves the cruciform DNA. In Nocardioides sp. (strain ATCC BAA-499 / JS614), this protein is Crossover junction endodeoxyribonuclease RuvC.